The following is a 1140-amino-acid chain: Envelopment polyprotein (1140 aa).

Positions 1–17 (MVGWVCISLVVLATTTA) are cleaved as a signal peptide. Residues 18–489 (GLTRNLYELK…VPGLHGWATT (472 aa)) are Lumenal-facing. 6 disulfide bridges follow: C30–C155, C64–C161, C113–C132, C137–C142, C179–C189, and C214–C251. N138 carries an N-linked (GlcNAc...) asparagine; by host glycan. N-linked (GlcNAc...) asparagine; by host glycosylation occurs at N351. 4 disulfide bridges follow: C380-C439, C384-C393, C409-C428, and C456-C479. N403 is a glycosylation site (N-linked (GlcNAc...) asparagine; by host). Residues 490–510 (ALLITFCFGWLLIPTITMIIL) form a helical membrane-spanning segment. Residues 511 to 631 (KILRLLTFSC…LGVFRYKSRC (121 aa)) are Cytoplasmic-facing. The interval 520–537 (CSHYSTESKFKAILERVK) is binding to the ribonucleoprotein. 2 consecutive CCHC-type zinc fingers follow at residues 549–569 (CDVCHHECETAKELETHKKSC) and 574–595 (CPYCMTMTESTESALQAHFSIC). Binding to the ribonucleoprotein stretches follow at residues 592–609 (FSICKLTNRFQENLKKSL), 596–607 (KLTNRFQENLKK), and 615–629 (KQGCYRTLGVFRYKS). The interval 611–638 (RPEVKQGCYRTLGVFRYKSRCYVGLVWG) is interaction with host TRAF3. In terms of domain architecture, ITAM spans 615–638 (KQGCYRTLGVFRYKSRCYVGLVWG). Phosphotyrosine; by host occurs at positions 619 and 632. A YxxL motif is present at residues 619–622 (YRTL). A helical membrane pass occupies residues 632-652 (YVGLVWGVLLTTELIVWAASA). Over 653–1108 (DTPLMESGWS…EWLLGILNGN (456 aa)) the chain is Lumenal. 8 disulfide bridges follow: C739–C774, C743–C781, C755–C888, C769–C899, C784–C907, C810–C819, C827–C836, and C867–C871. Residues 761–781 (YQYETSWGCNPPDCPGVGTGC) form a fusion loop region. N931 carries N-linked (GlcNAc...) asparagine; by host glycosylation. Intrachain disulfides connect C973–C1003, C996–C1048, C1013–C1018, C1049–C1054, and C1088–C1092. The chain crosses the membrane as a helical span at residues 1109–1129 (WVVVAVLIVILILSILLFSFF). The segment at 1125–1140 (LFSFFCPIRGRKNKSN) is binding to the ribonucleoprotein. Topologically, residues 1130-1140 (CPIRGRKNKSN) are cytoplasmic.

This sequence belongs to the hantavirus envelope glycoprotein family. In terms of assembly, homodimer. Homotetramer; forms heterotetrameric Gn-Gc spikes in the pre-fusion conformation. Interacts (via C-terminus) with the nucleoprotein. Interacts with host TUFM; this interaction contributes to the virus-induced degradation of mitochondria by autophagy, which leads to degradation of host MAVS and inhibition of type I interferon (IFN) responses. Interacts with host MAP1LC3B; this interaction contributes to the virus-induced degradation of mitochondria by autophagy, which leads to degradation of host MAVS and inhibition of type I interferon (IFN) responses. Interacts (via C-terminus) with host TRAF3 (via N-terminus); this interaction inhibits the formation of TRAF3-TBK1 complexes. Homodimer. Homotetramer; forms heterotetrameric Gn-Gc spikes in the pre-fusion conformation. Homotrimer; forms homotrimer in the post-fusion conformation at acidic pH. Interacts (via C-terminus) with the nucleoprotein. Envelope polyprotein precursor is quickly cleaved in vivo just after synthesis, presumably by host signal peptidase.

The protein resides in the virion membrane. The protein localises to the host cell surface. It localises to the host Golgi apparatus membrane. Its subcellular location is the host endoplasmic reticulum membrane. It is found in the host mitochondrion. Forms homotetramers with glycoprotein C at the surface of the virion. Attaches the virion to host cell receptors including integrin ITGAV/ITGB3. This attachment induces virion internalization predominantly through clathrin-dependent endocytosis. Mediates the assembly and budding of infectious virus particles through its interaction with the nucleocapsid protein and the viral genome. May dysregulate normal immune and endothelial cell responses through an ITAM motif. Translocates to mitochondria, binds to host TUFM and recruits MAP1LC3B. These interactions induce mitochondrial autophagy and therefore destruction of host MAVS leading to inhibition of type I interferon (IFN) responses. Concomitant breakdown of glycoprotein N is apparently prevented by the nucleoprotein that may inhibit Gn-stimulated autophagosome-lysosome fusion. Interacts with the viral genomic RNA. Inhibits the host RIG-I/TBK1 pathway by disrupting the formation of TBK1-TRAF3 complexes and downstream signaling responses required for IFN-beta transcription. Its function is as follows. Forms homotetramers with glycoprotein N at the surface of the virion. Attaches the virion to host cell receptors including integrin ITGAV/ITGB3. This attachment induces virion internalization predominantly through clathrin-dependent endocytosis. Class II fusion protein that promotes fusion of viral membrane with host endosomal membrane after endocytosis of the virion. The protein is Envelopment polyprotein (GP) of Homo sapiens (Human).